The sequence spans 207 residues: Probable RNA 2'-phosphotransferase (207 aa).

Belongs to the KptA/TPT1 family.

In terms of biological role, removes the 2'-phosphate from RNA via an intermediate in which the phosphate is ADP-ribosylated by NAD followed by a presumed transesterification to release the RNA and generate ADP-ribose 1''-2''-cyclic phosphate (APPR&gt;P). May function as an ADP-ribosylase. The polypeptide is Probable RNA 2'-phosphotransferase (Methanosarcina barkeri (strain Fusaro / DSM 804)).